Reading from the N-terminus, the 121-residue chain is Large ribosomal subunit protein uL24 (121 aa).

This sequence belongs to the universal ribosomal protein uL24 family. Part of the 50S ribosomal subunit.

One of two assembly initiator proteins, it binds directly to the 5'-end of the 23S rRNA, where it nucleates assembly of the 50S subunit. In terms of biological role, located at the polypeptide exit tunnel on the outside of the subunit. This chain is Large ribosomal subunit protein uL24, found in Pyrococcus horikoshii (strain ATCC 700860 / DSM 12428 / JCM 9974 / NBRC 100139 / OT-3).